The sequence spans 72 residues: DNA gyrase inhibitor YacG (72 aa).

4 residues coordinate Zn(2+): C17, C20, C32, and C36. The disordered stretch occupies residues 51–72 (IPGPEEEEMSYPPRSDDENRSR).

Belongs to the DNA gyrase inhibitor YacG family. Interacts with GyrB. Requires Zn(2+) as cofactor.

In terms of biological role, inhibits all the catalytic activities of DNA gyrase by preventing its interaction with DNA. Acts by binding directly to the C-terminal domain of GyrB, which probably disrupts DNA binding by the gyrase. This Methylorubrum extorquens (strain PA1) (Methylobacterium extorquens) protein is DNA gyrase inhibitor YacG.